Here is a 285-residue protein sequence, read N- to C-terminus: Elongation factor Ts (285 aa).

Residues threonine 75–valine 78 are involved in Mg(2+) ion dislocation from EF-Tu.

It belongs to the EF-Ts family.

Its subcellular location is the cytoplasm. Associates with the EF-Tu.GDP complex and induces the exchange of GDP to GTP. It remains bound to the aminoacyl-tRNA.EF-Tu.GTP complex up to the GTP hydrolysis stage on the ribosome. The protein is Elongation factor Ts of Alcanivorax borkumensis (strain ATCC 700651 / DSM 11573 / NCIMB 13689 / SK2).